The sequence spans 75 residues: Small ribosomal subunit protein bS18 (75 aa).

The protein belongs to the bacterial ribosomal protein bS18 family. Part of the 30S ribosomal subunit. Forms a tight heterodimer with protein bS6.

Binds as a heterodimer with protein bS6 to the central domain of the 16S rRNA, where it helps stabilize the platform of the 30S subunit. The sequence is that of Small ribosomal subunit protein bS18 from Cellvibrio japonicus (strain Ueda107) (Pseudomonas fluorescens subsp. cellulosa).